The chain runs to 110 residues: Large ribosomal subunit protein uL22 (110 aa).

This sequence belongs to the universal ribosomal protein uL22 family. Part of the 50S ribosomal subunit.

In terms of biological role, this protein binds specifically to 23S rRNA; its binding is stimulated by other ribosomal proteins, e.g. L4, L17, and L20. It is important during the early stages of 50S assembly. It makes multiple contacts with different domains of the 23S rRNA in the assembled 50S subunit and ribosome. Functionally, the globular domain of the protein is located near the polypeptide exit tunnel on the outside of the subunit, while an extended beta-hairpin is found that lines the wall of the exit tunnel in the center of the 70S ribosome. The protein is Large ribosomal subunit protein uL22 of Syntrophus aciditrophicus (strain SB).